Reading from the N-terminus, the 1194-residue chain is Pre-mRNA-processing ATP-dependent RNA helicase prp-5 (1194 aa).

Disordered stretches follow at residues 1–201, 224–248, and 452–484; these read MARL…KEAK, AVVG…ASPA, and ASGE…DDYG. Basic and acidic residues-rich tracts occupy residues 21 to 37 and 44 to 154; these read RKDD…GPVD and SPID…RDQP. A compositionally biased stretch (polar residues) spans 156 to 176; the sequence is PGNTTAKENEPAKSTPTQPQT. The segment covering 177-186 has biased composition (basic and acidic residues); that stretch reads EAEKKAERLR. A compositionally biased stretch (low complexity) spans 232 to 248; sequence SPAPASPAAAESPASPA. The segment covering 455–469 has biased composition (basic and acidic residues); the sequence is EESHSKADTLTEKKN. The Q motif signature appears at 561 to 589; that stretch reads QKWSQCGLTRPILDTIESLGFEKPTPIQM. The 179-residue stretch at 592–770 folds into the Helicase ATP-binding domain; that stretch reads LPVIMSGRDV…KKVLRDPVEI (179 aa). ATP is bound at residue 605–612; it reads AKTGSGKT. The DEAD box signature appears at 718–721; the sequence is DEAD. The Helicase C-terminal domain occupies 797–945; the sequence is RLLELLGELY…PVPDRLNEMR (149 aa). Disordered regions lie at residues 952-1011 and 1025-1056; these read VKAG…DKTK and DASK…SGGA. Composition is skewed to basic and acidic residues over residues 967 to 980, 997 to 1011, and 1025 to 1036; these read GLEK…AARM, EDAP…DKTK, and DASKAETEDKHA.

This sequence belongs to the DEAD box helicase family. DDX46/PRP5 subfamily.

The protein resides in the nucleus. The catalysed reaction is ATP + H2O = ADP + phosphate + H(+). Functionally, ATP-dependent RNA helicase involved spliceosome assembly and in nuclear splicing. Catalyzes an ATP-dependent conformational change of U2 snRNP. Bridges U1 and U2 snRNPs and enables stable U2 snRNP association with intron RNA. In Neurospora crassa (strain ATCC 24698 / 74-OR23-1A / CBS 708.71 / DSM 1257 / FGSC 987), this protein is Pre-mRNA-processing ATP-dependent RNA helicase prp-5 (prp-5).